The primary structure comprises 733 residues: Alpha,alpha-trehalose-phosphate synthase [UDP-forming] A (733 aa).

The protein in the N-terminal section; belongs to the glycosyltransferase 20 family. This sequence in the C-terminal section; belongs to the trehalose phosphatase family.

The catalysed reaction is D-glucose 6-phosphate + UDP-alpha-D-glucose = alpha,alpha-trehalose 6-phosphate + UDP + H(+). Its function is as follows. Synthesizes trehalose 6-phosphate, the precursor for the production of trehalose, the main carbohydrate storage reserve of the dormant spore. Trehalose accumulates in both prestalk and prespore cells and then is rapidly metabolized during terminal differentiation of stalk cells, while being stored in spores, where it serves as the principal energy and carbon source for germination. The sequence is that of Alpha,alpha-trehalose-phosphate synthase [UDP-forming] A (tpsA) from Dictyostelium discoideum (Social amoeba).